The chain runs to 480 residues: ATP synthase subunit beta 1 (480 aa).

154-161 (GGAGVGKT) contacts ATP.

Belongs to the ATPase alpha/beta chains family. In terms of assembly, F-type ATPases have 2 components, CF(1) - the catalytic core - and CF(0) - the membrane proton channel. CF(1) has five subunits: alpha(3), beta(3), gamma(1), delta(1), epsilon(1). CF(0) has four main subunits: a(1), b(1), b'(1) and c(9-12).

It is found in the cell inner membrane. It catalyses the reaction ATP + H2O + 4 H(+)(in) = ADP + phosphate + 5 H(+)(out). In terms of biological role, produces ATP from ADP in the presence of a proton gradient across the membrane. The catalytic sites are hosted primarily by the beta subunits. This Bradyrhizobium sp. (strain BTAi1 / ATCC BAA-1182) protein is ATP synthase subunit beta 1.